The sequence spans 266 residues: Dickkopf-related protein 1 (266 aa).

The N-terminal stretch at 1–31 is a signal peptide; it reads MMALGAAGATRVFVAMVAAALGGHPLLGVSA. O-linked (GalNAc...) serine glycosylation is present at Ser-61. 10 disulfides stabilise this stretch: Cys-85–Cys-97, Cys-91–Cys-111, Cys-114–Cys-128, Cys-121–Cys-133, Cys-127–Cys-138, Cys-189–Cys-201, Cys-195–Cys-210, Cys-200–Cys-237, Cys-220–Cys-245, and Cys-239–Cys-263. The interval 85 to 138 is DKK-type Cys-1; sequence CAEDEECGTDEYCASPTRGGDAGVQICLACRKRRKRCMRHAMCCPGNYCKNGIC. The DKK-type Cys-2 stretch occupies residues 189–263; it reads CLRSSDCASG…ASNSSRLHTC (75 aa). Asn-256 carries N-linked (GlcNAc...) asparagine glycosylation.

This sequence belongs to the dickkopf family. As to quaternary structure, interacts with LRP6. Interacts (via the C-terminal Cys-rich domain) with LRP5 (via beta-propeller regions 3 and 4); the interaction, enhanced by MESD and or KREMEN, antagonizes Wnt-mediated signaling. Forms a ternary complex with LRP6 and KREM1. Interacts with KREM1. In terms of tissue distribution, placenta.

It localises to the secreted. In terms of biological role, antagonizes canonical Wnt signaling by inhibiting LRP5/6 interaction with Wnt and by forming a ternary complex with the transmembrane protein KREMEN that promotes internalization of LRP5/6. DKKs play an important role in vertebrate development, where they locally inhibit Wnt regulated processes such as antero-posterior axial patterning, limb development, somitogenesis and eye formation. In the adult, Dkks are implicated in bone formation and bone disease, cancer and Alzheimer disease. Inhibits the pro-apoptotic function of KREMEN1 in a Wnt-independent manner, and has anti-apoptotic activity. This chain is Dickkopf-related protein 1 (DKK1), found in Homo sapiens (Human).